The sequence spans 709 residues: Translation initiation factor IF-2 (709 aa).

Composition is skewed to basic and acidic residues over residues 47 to 70 and 105 to 121; these read DHQY…EKPK and KGKE…EKKL. Residues 47 to 157 are disordered; it reads DHQYRPNTGK…QPAKKEKELP (111 aa). Basic residues predominate over residues 125–137; the sequence is AKKKGKGPAKGKK. The segment covering 138 to 149 has biased composition (low complexity); sequence QAAPAAKQAPQP. Positions 240–409 constitute a tr-type G domain; that stretch reads ERPPVVTIMG…LLVSEMEELK (170 aa). Residues 249–256 are G1; sequence GHVDHGKT. 249 to 256 is a GTP binding site; it reads GHVDHGKT. Positions 274–278 are G2; sequence GITQH. The segment at 295–298 is G3; it reads DTPG. GTP is bound by residues 295 to 299 and 349 to 352; these read DTPGH and NKID. A G4 region spans residues 349–352; it reads NKID. Residues 385–387 form a G5 region; the sequence is SAK.

This sequence belongs to the TRAFAC class translation factor GTPase superfamily. Classic translation factor GTPase family. IF-2 subfamily.

It localises to the cytoplasm. Its function is as follows. One of the essential components for the initiation of protein synthesis. Protects formylmethionyl-tRNA from spontaneous hydrolysis and promotes its binding to the 30S ribosomal subunits. Also involved in the hydrolysis of GTP during the formation of the 70S ribosomal complex. This is Translation initiation factor IF-2 from Geobacillus kaustophilus (strain HTA426).